The following is a 283-amino-acid chain: Bifunctional protein FolD (283 aa).

NADP(+) contacts are provided by residues 164–166 (GRS), serine 189, and isoleucine 230.

The protein belongs to the tetrahydrofolate dehydrogenase/cyclohydrolase family. As to quaternary structure, homodimer.

The catalysed reaction is (6R)-5,10-methylene-5,6,7,8-tetrahydrofolate + NADP(+) = (6R)-5,10-methenyltetrahydrofolate + NADPH. It carries out the reaction (6R)-5,10-methenyltetrahydrofolate + H2O = (6R)-10-formyltetrahydrofolate + H(+). The protein operates within one-carbon metabolism; tetrahydrofolate interconversion. Catalyzes the oxidation of 5,10-methylenetetrahydrofolate to 5,10-methenyltetrahydrofolate and then the hydrolysis of 5,10-methenyltetrahydrofolate to 10-formyltetrahydrofolate. The polypeptide is Bifunctional protein FolD (Lacticaseibacillus casei (strain BL23) (Lactobacillus casei)).